The chain runs to 286 residues: ATP synthase gamma chain (286 aa).

Belongs to the ATPase gamma chain family. As to quaternary structure, F-type ATPases have 2 components, CF(1) - the catalytic core - and CF(0) - the membrane proton channel. CF(1) has five subunits: alpha(3), beta(3), gamma(1), delta(1), epsilon(1). CF(0) has three main subunits: a, b and c.

The protein localises to the cell membrane. Functionally, produces ATP from ADP in the presence of a proton gradient across the membrane. The gamma chain is believed to be important in regulating ATPase activity and the flow of protons through the CF(0) complex. The chain is ATP synthase gamma chain from Bacillus anthracis (strain A0248).